Here is a 376-residue protein sequence, read N- to C-terminus: NAD-capped RNA hydrolase (376 aa).

Zn(2+) contacts are provided by C182, C185, C200, and C211. Residues Y222, 258–260 (AGF), E274, E278, and E321 contribute to the substrate site. The 129-residue stretch at 223-351 (PRTDPCVIMV…KDGPAPILFP (129 aa)) folds into the Nudix hydrolase domain. Mg(2+) is bound by residues A258, E274, E278, and E321. A Nudix box motif is present at residues 259–280 (GFLEPGESLEEAVVRETYEESG). Positions 374 to 376 (VKM) match the Microbody targeting signal motif.

The protein belongs to the Nudix hydrolase family. NudC subfamily. Homodimer. It depends on Mg(2+) as a cofactor. Zn(2+) is required as a cofactor.

The catalysed reaction is a 5'-end NAD(+)-phospho-ribonucleoside in mRNA + H2O = a 5'-end phospho-adenosine-phospho-ribonucleoside in mRNA + beta-nicotinamide D-ribonucleotide + 2 H(+). It catalyses the reaction NAD(+) + H2O = beta-nicotinamide D-ribonucleotide + AMP + 2 H(+). It carries out the reaction NADH + H2O = reduced beta-nicotinamide D-ribonucleotide + AMP + 2 H(+). In terms of biological role, mRNA decapping enzyme that specifically removes the nicotinamide adenine dinucleotide (NAD) cap from a subset of mRNAs by hydrolyzing the diphosphate linkage to produce nicotinamide mononucleotide (NMN) and 5' monophosphate mRNA. The NAD-cap is present at the 5'-end of some RNAs; in contrast to the canonical N7 methylguanosine (m7G) cap, the NAD cap promotes mRNA decay. Mediates the hydrolysis of some nucleoside diphosphate derivatives. This chain is NAD-capped RNA hydrolase, found in Schizosaccharomyces pombe (strain 972 / ATCC 24843) (Fission yeast).